A 185-amino-acid chain; its full sequence is Intraflagellar transport protein 22 homolog (185 aa).

GTP contacts are provided by residues 10 to 17 (GPCESGKT), 63 to 67 (DCGGD), and 123 to 126 (HKPG).

This sequence belongs to the small GTPase superfamily. Rab family. In terms of assembly, component of the IFT complex B, at least composed of IFT20, IFT22, IFT25, IFT27, IFT46, IFT52, TRAF3IP1/IFT54, IFT57, IFT74, IFT80, IFT81, and IFT88. Interacts with IFT88. Interacts with CFAP61.

Its subcellular location is the cell projection. It is found in the cilium. Functionally, small GTPase-like component of the intraflagellar transport (IFT) complex B. The sequence is that of Intraflagellar transport protein 22 homolog (IFT22) from Bos taurus (Bovine).